Here is a 257-residue protein sequence, read N- to C-terminus: UPF0758 protein Bcenmc03_2526 (257 aa).

Residues 1–53 form a disordered region; the sequence is MLSPCPILPSAECRDTADTPADPPGRVIPINRRRRRPGDWRPERPRERLLERG. Residues 37–51 are compositionally biased toward basic and acidic residues; it reads PGDWRPERPRERLLE. An MPN domain is found at 135 to 257; that stretch reads QIDSPGAVED…TFSFARAGWL (123 aa). 3 residues coordinate Zn(2+): H206, H208, and D219. The short motif at 206 to 219 is the JAMM motif element; it reads HNHPSGAVQPSAED.

It belongs to the UPF0758 family.

This chain is UPF0758 protein Bcenmc03_2526, found in Burkholderia orbicola (strain MC0-3).